The following is a 1266-amino-acid chain: Intermembrane phospholipid transporter YhdP (1266 aa).

The Cytoplasmic segment spans residues 1–5 (MRRLP). The helical transmembrane segment at 6 to 26 (GILLLTGAALVVIAALLVSGL) threads the bilayer. Residues 27–1266 (RIALPHLDAW…LRQPRKEKAQ (1240 aa)) lie on the Periplasmic side of the membrane. The interval 94–103 (VWQSLLHMRW) is P-helix. The segment at 1121–1144 (HAGQLLRLLSVDALMRKLRFDFRD) is C-helix_2. The C-helix_1 stretch occupies residues 1203 to 1237 (ISATVGVAAAFAVNPIVGAAVFAASKVLGPLWSKV).

It is found in the cell inner membrane. Its function is as follows. Involved in outer membrane lipid homeostasis. Likely transports phospholipids between the inner membrane and the outer membrane. It would provide a bridge-like structure that protects phospholipids as they travel across the periplasm. The phosphate-containing molecules are captured along the length of a hydrophobic groove that is continuous along all but the extreme N-terminus of the protein. It also appears to control, directly or indirectly, levels of cyclic enterobacterial common antigen (cyclic ECA), a soluble cyclic ECA molecule present in the periplasm. Functionally, tamB, YdbH and YhdP are redundant, but not equivalent, in performing an essential function for growth and maintaining lipid homeostasis in the outer membrane. The transport functions of TamB and YhdP could be differentiated according to the fatty acid saturation state of the phospholipids, with TamB transporting more unsaturated phospholipids and YhdP more saturated phospholipids. Any of these three proteins is sufficient for growth. This Escherichia coli (strain K12) protein is Intermembrane phospholipid transporter YhdP (yhdP).